The following is a 457-amino-acid chain: Carboxypeptidase N catalytic chain (457 aa).

The signal sequence occupies residues 1–23 (MPDLPSAFLPLLLLSKFVTPVTF). The 315-residue stretch at 24-338 (RHHRYDDLVR…EALIQFLEQV (315 aa)) folds into the Peptidase M14 domain. C42 and C104 are disulfide-bonded. Zn(2+)-binding residues include H86, E89, and H216. C271 and C311 are disulfide-bonded. E308 acts as the Proton donor/acceptor in catalysis. T400, T402, and T409 each carry an O-linked (GalNAc...) threonine glycan. The segment at 418-457 (STTQVHPVQKAPGRGQGSRAKQPRTSRKKDQAAKRHRGPA) is disordered.

It belongs to the peptidase M14 family. Tetramer of two catalytic chains and two glycosylated inactive chains. The cofactor is Zn(2+). In terms of tissue distribution, plasma. Expressed in liver.

Its subcellular location is the secreted. The protein localises to the extracellular space. The enzyme catalyses Release of a C-terminal basic amino acid, preferentially lysine.. Protects the body from potent vasoactive and inflammatory peptides containing C-terminal Arg or Lys (such as kinins or anaphylatoxins) which are released into the circulation. The sequence is that of Carboxypeptidase N catalytic chain (Cpn1) from Rattus norvegicus (Rat).